A 333-amino-acid chain; its full sequence is Holliday junction branch migration complex subunit RuvB (333 aa).

Positions 1–182 (MDERLLSGES…FGVLSRLEYY (182 aa)) are large ATPase domain (RuvB-L). Residues leucine 21, arginine 22, glycine 63, lysine 66, threonine 67, threonine 68, 129 to 131 (EDF), arginine 172, tyrosine 182, and arginine 219 each bind ATP. Threonine 67 is a Mg(2+) binding site. A small ATPAse domain (RuvB-S) region spans residues 183–253 (TVDQLSAIVE…ITQMALELLQ (71 aa)). Residues 256–333 (KLGLDHIDHK…EHFGMEMPKV (78 aa)) form a head domain (RuvB-H) region. DNA contacts are provided by arginine 311 and arginine 316.

Belongs to the RuvB family. Homohexamer. Forms an RuvA(8)-RuvB(12)-Holliday junction (HJ) complex. HJ DNA is sandwiched between 2 RuvA tetramers; dsDNA enters through RuvA and exits via RuvB. An RuvB hexamer assembles on each DNA strand where it exits the tetramer. Each RuvB hexamer is contacted by two RuvA subunits (via domain III) on 2 adjacent RuvB subunits; this complex drives branch migration. In the full resolvosome a probable DNA-RuvA(4)-RuvB(12)-RuvC(2) complex forms which resolves the HJ.

It is found in the cytoplasm. It catalyses the reaction ATP + H2O = ADP + phosphate + H(+). Its function is as follows. The RuvA-RuvB-RuvC complex processes Holliday junction (HJ) DNA during genetic recombination and DNA repair, while the RuvA-RuvB complex plays an important role in the rescue of blocked DNA replication forks via replication fork reversal (RFR). RuvA specifically binds to HJ cruciform DNA, conferring on it an open structure. The RuvB hexamer acts as an ATP-dependent pump, pulling dsDNA into and through the RuvAB complex. RuvB forms 2 homohexamers on either side of HJ DNA bound by 1 or 2 RuvA tetramers; 4 subunits per hexamer contact DNA at a time. Coordinated motions by a converter formed by DNA-disengaged RuvB subunits stimulates ATP hydrolysis and nucleotide exchange. Immobilization of the converter enables RuvB to convert the ATP-contained energy into a lever motion, pulling 2 nucleotides of DNA out of the RuvA tetramer per ATP hydrolyzed, thus driving DNA branch migration. The RuvB motors rotate together with the DNA substrate, which together with the progressing nucleotide cycle form the mechanistic basis for DNA recombination by continuous HJ branch migration. Branch migration allows RuvC to scan DNA until it finds its consensus sequence, where it cleaves and resolves cruciform DNA. The sequence is that of Holliday junction branch migration complex subunit RuvB from Bacillus cereus (strain Q1).